We begin with the raw amino-acid sequence, 1387 residues long: DNA-directed RNA polymerase subunit beta'' (1387 aa).

Positions 220, 291, 298, and 301 each coordinate Zn(2+).

The protein belongs to the RNA polymerase beta' chain family. RpoC2 subfamily. As to quaternary structure, in plastids the minimal PEP RNA polymerase catalytic core is composed of four subunits: alpha, beta, beta', and beta''. When a (nuclear-encoded) sigma factor is associated with the core the holoenzyme is formed, which can initiate transcription. Zn(2+) is required as a cofactor.

It is found in the plastid. Its subcellular location is the chloroplast. The catalysed reaction is RNA(n) + a ribonucleoside 5'-triphosphate = RNA(n+1) + diphosphate. In terms of biological role, DNA-dependent RNA polymerase catalyzes the transcription of DNA into RNA using the four ribonucleoside triphosphates as substrates. In Carica papaya (Papaya), this protein is DNA-directed RNA polymerase subunit beta''.